We begin with the raw amino-acid sequence, 283 residues long: Pantothenate synthetase (283 aa).

34–41 (MGALHDGH) is a binding site for ATP. H41 serves as the catalytic Proton donor. A (R)-pantoate-binding site is contributed by Q65. Q65 is a beta-alanine binding site. 152 to 155 (GEKD) is an ATP binding site. A (R)-pantoate-binding site is contributed by Q158. Residues V181 and 189–192 (MSSR) contribute to the ATP site.

This sequence belongs to the pantothenate synthetase family. In terms of assembly, homodimer.

It localises to the cytoplasm. The enzyme catalyses (R)-pantoate + beta-alanine + ATP = (R)-pantothenate + AMP + diphosphate + H(+). Its pathway is cofactor biosynthesis; (R)-pantothenate biosynthesis; (R)-pantothenate from (R)-pantoate and beta-alanine: step 1/1. Its function is as follows. Catalyzes the condensation of pantoate with beta-alanine in an ATP-dependent reaction via a pantoyl-adenylate intermediate. The chain is Pantothenate synthetase from Rhodopseudomonas palustris (strain BisB18).